The following is a 36-amino-acid chain: Mu/omega-theraphotoxin-Pmu1a (36 aa).

Disulfide bonds link cysteine 2–cysteine 16, cysteine 9–cysteine 21, and cysteine 15–cysteine 29.

It belongs to the neurotoxin 10 (Hwtx-1) family. In terms of tissue distribution, expressed by the venom gland.

Its subcellular location is the secreted. In terms of biological role, gating-modifier toxin that targets both voltage-gated sodium and calcium channels, with described activities on human Nav1.7/SCN9A (IC(50)=5.5-7 nM), hNav1.6/SCN10A (IC(50)=9.9 nM), hNav1.4/SCN4A (IC(50)=62.9 nM), hCav3.2/CACNA1H (IC(50)=955.4 nM or 63.5% inhibition at 10 uM), hCav3.1/CACNA1G (95.1% inhibition at 10 uM), hCav3.3/CACNA1I (90.8% inhibition at 10 uM). Acts on Cav3 currents mainly by inducing a strong depolarizing shift in the current-voltage curve. The chain is Mu/omega-theraphotoxin-Pmu1a from Pterinochilus murinus (Mombasa golden starburst baboon spider).